The following is a 186-amino-acid chain: Peptide deformylase (186 aa).

Fe cation-binding residues include cysteine 113 and histidine 156. Residue glutamate 157 is part of the active site. Position 160 (histidine 160) interacts with Fe cation.

Belongs to the polypeptide deformylase family. The cofactor is Fe(2+).

It carries out the reaction N-terminal N-formyl-L-methionyl-[peptide] + H2O = N-terminal L-methionyl-[peptide] + formate. In terms of biological role, removes the formyl group from the N-terminal Met of newly synthesized proteins. Requires at least a dipeptide for an efficient rate of reaction. N-terminal L-methionine is a prerequisite for activity but the enzyme has broad specificity at other positions. The protein is Peptide deformylase of Ligilactobacillus salivarius (strain UCC118) (Lactobacillus salivarius).